The chain runs to 302 residues: Monopolin complex subunit MAM1 (302 aa).

Disordered regions lie at residues Tyr53–Val83 and Thr257–Lys276. Over residues Thr257–Thr268 the composition is skewed to polar residues.

Component of the monopolin complex composed of at least CSM1, LRS4 and MAM1. The complex associates with the kinetochore during late pachytene. Phosphorylated by CDC5. This phosphorylation is required for the location to the kinetochores during late pachytene.

Its subcellular location is the nucleus. Functionally, component of the monopolin complex which promotes monoorientation during meiosis I, required for chromosome segregation during meiosis. This Saccharomyces cerevisiae (strain ATCC 204508 / S288c) (Baker's yeast) protein is Monopolin complex subunit MAM1 (MAM1).